The following is a 295-amino-acid chain: Small ribosomal subunit protein uS2 (295 aa).

This sequence belongs to the universal ribosomal protein uS2 family. As to quaternary structure, component of the small ribosomal subunit. Mature ribosomes consist of a small (40S) and a large (60S) subunit. The 40S subunit contains about 33 different proteins and 1 molecule of RNA (18S). The 60S subunit contains about 49 different proteins and 3 molecules of RNA (25S, 5.8S and 5S). Interacts with RPS21.

The protein resides in the cytoplasm. Functionally, required for the assembly and/or stability of the 40S ribosomal subunit. Required for the processing of the 20S rRNA-precursor to mature 18S rRNA in a late step of the maturation of 40S ribosomal subunits. In Paracoccidioides brasiliensis (strain Pb18), this protein is Small ribosomal subunit protein uS2.